Consider the following 453-residue polypeptide: uncharacterized protein (453 aa).

Positions 74, 80, 83, and 162 each coordinate [4Fe-4S] cluster. Residues Q286, Y315, E336, and D384 each coordinate S-adenosyl-L-methionine. C411 serves as the catalytic Nucleophile.

This sequence belongs to the class I-like SAM-binding methyltransferase superfamily. RNA M5U methyltransferase family.

This is an uncharacterized protein from Staphylococcus aureus (strain Mu50 / ATCC 700699).